Here is a 373-residue protein sequence, read N- to C-terminus: MIELVTDSPHPIHLVDSLQNPKLFASLSTDFPLIFITNTKLNTLILPPLLDLARSLGFSVETLTIPEGEETKTGDTFLSLHQQLTDLNVPRQATLIGVGGGVILDIAGFVAATHCRGMPFIAIPTTLVAMIDASIGGKNGINLNHIKNRIGSFYLPKAVWICPRKLSFLPQQELHHGIAECIKHAYIADSAILPLLQDPNALKKEDKLSLLIKKNCLCKASVVQQDVRDYAKRQILNFGHTLGHALEMLFIGKIPHSCAISVGMVLETKLSLSLGVARSPAILHSLIQDLLRYQLPVSLKDLYMRAQIPPHNCDQILSALTYDKKKQNTPLPPFVMIEEIGLAASFDGRFCQTISKHILTKVLEEEFYAMHNN.

Residues 67-72 (EGEETK), 101-105 (GVILD), 125-126 (TT), lysine 138, and lysine 147 contribute to the NAD(+) site. Zn(2+)-binding residues include glutamate 180, histidine 240, and histidine 256.

It belongs to the sugar phosphate cyclases superfamily. Dehydroquinate synthase family. Requires NAD(+) as cofactor. Co(2+) serves as cofactor. The cofactor is Zn(2+).

The protein localises to the cytoplasm. It carries out the reaction 7-phospho-2-dehydro-3-deoxy-D-arabino-heptonate = 3-dehydroquinate + phosphate. It participates in metabolic intermediate biosynthesis; chorismate biosynthesis; chorismate from D-erythrose 4-phosphate and phosphoenolpyruvate: step 2/7. Functionally, catalyzes the conversion of 3-deoxy-D-arabino-heptulosonate 7-phosphate (DAHP) to dehydroquinate (DHQ). This Chlamydia trachomatis serovar L2 (strain ATCC VR-902B / DSM 19102 / 434/Bu) protein is 3-dehydroquinate synthase.